We begin with the raw amino-acid sequence, 38 residues long: Large ribosomal subunit protein bL36 (38 aa).

It belongs to the bacterial ribosomal protein bL36 family.

This chain is Large ribosomal subunit protein bL36, found in Myxococcus xanthus (strain DK1622).